The following is a 677-amino-acid chain: DNA ligase (677 aa).

Residues 38 to 42 (DYDFD), 87 to 88 (SL), and Glu-121 contribute to the NAD(+) site. Catalysis depends on Lys-123, which acts as the N6-AMP-lysine intermediate. NAD(+) contacts are provided by Arg-144, Glu-187, Lys-300, and Lys-324. Zn(2+) contacts are provided by Cys-418, Cys-421, Cys-436, and Cys-442. In terms of domain architecture, BRCT spans 601 to 677 (LINSNFEGLS…ISEEEFEAML (77 aa)).

Belongs to the NAD-dependent DNA ligase family. LigA subfamily. Requires Mg(2+) as cofactor. It depends on Mn(2+) as a cofactor.

It carries out the reaction NAD(+) + (deoxyribonucleotide)n-3'-hydroxyl + 5'-phospho-(deoxyribonucleotide)m = (deoxyribonucleotide)n+m + AMP + beta-nicotinamide D-nucleotide.. Its function is as follows. DNA ligase that catalyzes the formation of phosphodiester linkages between 5'-phosphoryl and 3'-hydroxyl groups in double-stranded DNA using NAD as a coenzyme and as the energy source for the reaction. It is essential for DNA replication and repair of damaged DNA. In Chlorobium luteolum (strain DSM 273 / BCRC 81028 / 2530) (Pelodictyon luteolum), this protein is DNA ligase.